The chain runs to 519 residues: Xylose import ATP-binding protein XylG (519 aa).

ABC transporter domains are found at residues 6–245 and 262–507; these read LTMR…VGRE and LDVR…LKPA. 38–45 serves as a coordination point for ATP; it reads GENGAGKS.

The protein belongs to the ABC transporter superfamily. Xylose importer (TC 3.A.1.2.4) family. As to quaternary structure, the complex is composed of two ATP-binding proteins (XylG), two transmembrane proteins (XylH) and a solute-binding protein (XylF).

The protein localises to the cell inner membrane. It catalyses the reaction D-xylose(out) + ATP + H2O = D-xylose(in) + ADP + phosphate + H(+). In terms of biological role, part of the ABC transporter complex XylFGH involved in xylose import. Responsible for energy coupling to the transport system. The chain is Xylose import ATP-binding protein XylG from Burkholderia cenocepacia (strain HI2424).